A 37-amino-acid polypeptide reads, in one-letter code: Large ribosomal subunit protein bL36 (37 aa).

The protein belongs to the bacterial ribosomal protein bL36 family.

This is Large ribosomal subunit protein bL36 from Metamycoplasma arthritidis (strain 158L3-1) (Mycoplasma arthritidis).